The following is a 400-amino-acid chain: Putative F-box protein At1g30920 (400 aa).

One can recognise an F-box domain in the interval 4 to 49 (EENTDSIPIDLILDILSRLPSKSIARCRCVSKLWESMIRQSYFTEL).

In Arabidopsis thaliana (Mouse-ear cress), this protein is Putative F-box protein At1g30920.